The sequence spans 629 residues: tRNA uridine 5-carboxymethylaminomethyl modification enzyme MnmG (629 aa).

Residues 13-18 (GGGHAG), Val125, and Ser180 contribute to the FAD site. NAD(+) is bound at residue 273–287 (GPRYCPSIEDKIHRF). Residue Gln370 participates in FAD binding.

It belongs to the MnmG family. As to quaternary structure, homodimer. Heterotetramer of two MnmE and two MnmG subunits. It depends on FAD as a cofactor.

It localises to the cytoplasm. In terms of biological role, NAD-binding protein involved in the addition of a carboxymethylaminomethyl (cmnm) group at the wobble position (U34) of certain tRNAs, forming tRNA-cmnm(5)s(2)U34. The chain is tRNA uridine 5-carboxymethylaminomethyl modification enzyme MnmG from Shewanella sp. (strain ANA-3).